The sequence spans 238 residues: Octanoyltransferase (238 aa).

The 181-residue stretch at 44-224 folds into the BPL/LPL catalytic domain; the sequence is AGGPDSLLLL…AVLDALDGRI (181 aa). Substrate contacts are provided by residues 82-89, 154-156, and 167-169; these read RGGKITWH, AIG, and GFA. Cysteine 185 serves as the catalytic Acyl-thioester intermediate.

This sequence belongs to the LipB family.

Its subcellular location is the cytoplasm. It carries out the reaction octanoyl-[ACP] + L-lysyl-[protein] = N(6)-octanoyl-L-lysyl-[protein] + holo-[ACP] + H(+). Its pathway is protein modification; protein lipoylation via endogenous pathway; protein N(6)-(lipoyl)lysine from octanoyl-[acyl-carrier-protein]: step 1/2. In terms of biological role, catalyzes the transfer of endogenously produced octanoic acid from octanoyl-acyl-carrier-protein onto the lipoyl domains of lipoate-dependent enzymes. Lipoyl-ACP can also act as a substrate although octanoyl-ACP is likely to be the physiological substrate. In Mycolicibacterium gilvum (strain PYR-GCK) (Mycobacterium gilvum (strain PYR-GCK)), this protein is Octanoyltransferase.